We begin with the raw amino-acid sequence, 194 residues long: GTP cyclohydrolase 1 (194 aa).

Positions 83, 86, and 155 each coordinate Zn(2+).

It belongs to the GTP cyclohydrolase I family. Toroid-shaped homodecamer, composed of two pentamers of five dimers.

It carries out the reaction GTP + H2O = 7,8-dihydroneopterin 3'-triphosphate + formate + H(+). Its pathway is cofactor biosynthesis; 7,8-dihydroneopterin triphosphate biosynthesis; 7,8-dihydroneopterin triphosphate from GTP: step 1/1. The protein is GTP cyclohydrolase 1 of Streptococcus pyogenes serotype M5 (strain Manfredo).